The chain runs to 250 residues: Phosphoribosylaminoimidazole-succinocarboxamide synthase (250 aa).

The protein belongs to the SAICAR synthetase family.

The catalysed reaction is 5-amino-1-(5-phospho-D-ribosyl)imidazole-4-carboxylate + L-aspartate + ATP = (2S)-2-[5-amino-1-(5-phospho-beta-D-ribosyl)imidazole-4-carboxamido]succinate + ADP + phosphate + 2 H(+). It functions in the pathway purine metabolism; IMP biosynthesis via de novo pathway; 5-amino-1-(5-phospho-D-ribosyl)imidazole-4-carboxamide from 5-amino-1-(5-phospho-D-ribosyl)imidazole-4-carboxylate: step 1/2. The chain is Phosphoribosylaminoimidazole-succinocarboxamide synthase from Bifidobacterium longum (strain DJO10A).